The following is a 640-amino-acid chain: MAKVVGIDLGTTNSCVAVMEGGKPTVIANAEGFRTTPSVVAYTKNGDRLVGQIAKRQAVMNPENTFYSVKRFIGRRFDEVTHEATEVSYKVLNVNGNVKLDCPALGKQFAPEEISAQVLRKLKEDASKYLGEEVTQAVITVPAYFNDSQRQATKDAGKIAGLEVLRIINEPTAASLAYGLDKKANETILVFDLGGGTFDVSILEVGDGVFEVLATSGDTHLGGDDFDKKIVDYLAESFRAQEGIDLRKDRQALQRLTEAAEKAKIELSSVMQTEINLPFITATQDGPKHLDMTLTRAKFEELCSDLIDRCRVPVEQALKDAKLSKDQIDEVVLVGGSTRIPAIQELVKRLLGKDPNQSVNPDEVVAVGAAIQAGVLAGEVKDILLLDVTPLSLGVETLGGVMTKIIPRNTTIPTKKSEVFSTAVDGQTNVEIHVLQGEREMAADNKSLGTFRLDGIPPAPRGVPQIEVTFDIDANGILNVTARDKGTGKQQSISITGASTLPKEEVERMVREAEMNAAADKAKREKIETKNQAEQLCYQAEKQLNELGDKVSTSDKDRLTSLIANLRSEIGTEAEKKPIDAIDFGRVKSLMQDLQQALYSVGSSVYQSAQSSDGTGSSSSGGSGSGGDDEVIDAEFSETK.

Position 197 is a phosphothreonine; by autocatalysis (threonine 197). The tract at residues 605-640 is disordered; sequence VYQSAQSSDGTGSSSSGGSGSGGDDEVIDAEFSETK. Acidic residues predominate over residues 627 to 640; it reads GDDEVIDAEFSETK.

The protein belongs to the heat shock protein 70 family.

Functionally, acts as a chaperone. In Thermosynechococcus vestitus (strain NIES-2133 / IAM M-273 / BP-1), this protein is Chaperone protein dnaK2 (dnaK2).